The sequence spans 441 residues: Glutamyl-tRNA reductase (441 aa).

Substrate contacts are provided by residues 49–52 (TCNR), serine 109, 114–116 (EGQ), and glutamine 120. The active-site Nucleophile is cysteine 50. NADP(+) is bound at residue 198–203 (GAGRMS).

It belongs to the glutamyl-tRNA reductase family. As to quaternary structure, homodimer.

The catalysed reaction is (S)-4-amino-5-oxopentanoate + tRNA(Glu) + NADP(+) = L-glutamyl-tRNA(Glu) + NADPH + H(+). It functions in the pathway porphyrin-containing compound metabolism; protoporphyrin-IX biosynthesis; 5-aminolevulinate from L-glutamyl-tRNA(Glu): step 1/2. Its pathway is porphyrin-containing compound metabolism; chlorophyll biosynthesis. Functionally, catalyzes the NADPH-dependent reduction of glutamyl-tRNA(Glu) to glutamate 1-semialdehyde (GSA). The sequence is that of Glutamyl-tRNA reductase from Prochlorococcus marinus (strain NATL2A).